The chain runs to 227 residues: Arginine ABC transporter permease protein ArtM (227 aa).

In terms of domain architecture, ABC transmembrane type-1 spans 13 to 209 (IPTSLLLTVV…IITGIATLLL (197 aa)). Transmembrane regions (helical) follow at residues 17–37 (LLLT…LTFL), 51–71 (LYLT…IYAG), 78–98 (IIDS…ALAL), 155–175 (IILV…DIMG), and 188–208 (LTIY…ATLL).

Belongs to the binding-protein-dependent transport system permease family. HisMQ subfamily. The complex is composed of two ATP-binding proteins (ArtP), two transmembrane proteins (ArtM and ArtQ) and a solute-binding protein (ArtI).

It is found in the cell inner membrane. In terms of biological role, part of the ABC transporter complex ArtPIQM involved in arginine transport. Probably responsible for the translocation of the substrate across the membrane. The sequence is that of Arginine ABC transporter permease protein ArtM (artM) from Haemophilus influenzae (strain ATCC 51907 / DSM 11121 / KW20 / Rd).